A 73-amino-acid polypeptide reads, in one-letter code: Excelsatoxin A (73 aa).

Positions 1-20 (MRFALVAAITIALLVAGSVA) are cleaved as a signal peptide. The propeptide occupies 21–37 (DESSEDIDNIVIKTPLD). 3 disulfide bridges follow: Cys-41-Cys-58, Cys-46-Cys-60, and Cys-54-Cys-69.

It belongs to the gympietide family. Expressed in trichomes, that are stiff epidermal hairs located on the surface of petioles and leaves. Not expressed in other aerial parts.

The protein localises to the secreted. Neurotoxin certainly responsible for the defensive, persistent, and painful stings of the giant stinging tree. Inhibits inactivation of Nav1.7/SCN9A sodium channel in sensory neurons by directly interacting with TMEM233, a newly described Nav-interacting protein. Has virtually no effect on Nav1.7/SCN9A function in heterologous expression systems and in neurons that do not express TMEM233. Also weakly but significantly affects Nav1.8/SCN10A. Coexpression of TMEM233 with Nav also confers ExTxA sensitivity to Nav1.1-Nav1.6. On the Nav1.7/SCN9A channel, causes a significant hyperpolarizing shift in the voltage dependence of activation. Its effects on Nav currents are irreversible, with no apparent reduction in activity even after repeated wash steps over 30 minutes. Does not show activity on Nav1.9/SCN11A. Does not show insecticidal activities. In vivo, induces nocifensive behavior in mice (licking or biting and shaking or lifting of the affected paw) lasting for approximately 1 hour. The protein is Excelsatoxin A of Dendrocnide excelsa (Giant stinging tree).